Consider the following 412-residue polypeptide: Protein MT3510 (412 aa).

Residue Lys227 is modified to N6-(pyridoxal phosphate)lysine.

It belongs to the DegT/DnrJ/EryC1 family.

The sequence is that of Protein MT3510 from Mycobacterium tuberculosis (strain CDC 1551 / Oshkosh).